Reading from the N-terminus, the 146-residue chain is UPF0178 protein BAMEG_1545 (146 aa).

It belongs to the UPF0178 family.

The chain is UPF0178 protein BAMEG_1545 from Bacillus anthracis (strain CDC 684 / NRRL 3495).